Consider the following 398-residue polypeptide: Galactose-3-O-sulfotransferase 2 (398 aa).

Residues 1–10 (MMSMLGGLQR) lie on the Cytoplasmic side of the membrane. Residues 11-31 (YFRVILLLLLALTLLLLAGFL) traverse the membrane as a helical; Signal-anchor for type II membrane protein segment. At 32–398 (HSDLELDTPL…PLKNIPFLGA (367 aa)) the chain is on the lumenal side. N-linked (GlcNAc...) asparagine glycosylation is found at asparagine 79, asparagine 132, asparagine 179, asparagine 287, asparagine 330, and asparagine 360.

It belongs to the galactose-3-O-sulfotransferase family. Ubiquitous. Detected in heart, stomach, colon, liver and spleen, in epithelial cells lining the lower to middle layer of the crypts in colonic mucosa, hepatocytes surrounding the central vein of the liver, extravillous cytotrophoblasts in the basal plate of the septum of the placenta, renal tubules of the kidney, and neuronal cells of the cerebral cortex.

It localises to the golgi apparatus. Its subcellular location is the golgi stack membrane. The protein operates within protein modification; carbohydrate sulfation. Strongly inhibited by Cu(2+) and Zn(2+). Functionally, transfers a sulfate group to the hydroxyl group at C3 of non-reducing beta-galactosyl residues. Acts both on type 1 (Gal-beta-1,3-GlcNAc) and type 2 (Gal-beta-1,4-GlcNAc) chains with similar efficiency. The chain is Galactose-3-O-sulfotransferase 2 (GAL3ST2) from Homo sapiens (Human).